We begin with the raw amino-acid sequence, 522 residues long: Cytochrome P450 monooxygenase FGSG_08207 (522 aa).

Residues 10-30 (LLLSKPVVLGLAACALLFLIG) traverse the membrane as a helical segment. N-linked (GlcNAc...) asparagine glycosylation is found at Asn-104 and Asn-155. Cys-441 contacts heme.

The protein belongs to the cytochrome P450 family. The cofactor is heme.

The protein resides in the membrane. Its pathway is secondary metabolite biosynthesis. Cytochrome P450 monooxygenase; part of the gene cluster that mediates the biosynthesis of the lipopeptide fusaristatin A. Fusaristatin A consists of a polyketide chain linked to three amino acid residues glutamine (Gln), dehydroalanine (dehydro-Ala), and beta-aminoisobutyric acid. The biosynthesis starts with formation of a linear polyketide chain by the highly reducing polyketide synthase PKS6. The gene cluster does not contain an acyl-CoA ligase or an acyl-transferase, and it is therefore predicted that the polyketide is transferred directly to the nonribosomal peptide synthetase NRPS7. Modules 1-3 from NRPS7 incorporate dehydro-Ala, Gln, and beta-aminoisobutyric acid in the compound, which is released by cyclization. The beta-aminoisobutyric acid units are most likely not freely available to the NRPS, but can be synthesized from thymine, which requires a dehydrogenase, a monooxygenase, and an aminotransferase. The fusaristatin A cluster contains a cytochrome P450 monooxygenase (FGSG_08207) and an aminotransferase (FGSG_17085), which theoretically can perform two of the enzymatic steps. The enzymes may however also be involved in biosynthesis of dehydroalanine or modification of the polyketide. The dehydro-Ala residue can be a result of cyclization, where serine is dehydrated. The last gene of the cluster encodes a protein with an A/B barrel domain found in variable enzymes, which hampers functional prediction. This Gibberella zeae (strain ATCC MYA-4620 / CBS 123657 / FGSC 9075 / NRRL 31084 / PH-1) (Wheat head blight fungus) protein is Cytochrome P450 monooxygenase FGSG_08207.